Reading from the N-terminus, the 1058-residue chain is Protein argonaute MEL1 (1058 aa).

Composition is skewed to gly residues over residues 1–12 and 24–37; these read MAYRGGGRGGRG and DVPG…GGGA. Disordered stretches follow at residues 1 to 77 and 115 to 147; these read MAYR…YGAP and RAPP…PSAT. Residues 48–70 show a composition bias toward pro residues; sequence WPPPGMTPRPGPPQPQYPRPGPP. Over residues 121–147 the composition is skewed to low complexity; it reads HSSAPAPYQPAAAAPAPSSSSTAPSAT. The region spanning 407 to 520 is the PAZ domain; that stretch reads TVIQFVEEFL…LPMEVCKIVE (114 aa). A Piwi domain is found at 696 to 1016; it reads LLIVILPEVS…AAFRARYYVE (321 aa).

The protein belongs to the argonaute family. Ago subfamily.

The protein resides in the nucleus. It is found in the nucleolus. Its function is as follows. Essential for the progression of premeiotic mitosis and meiosis during sporogenesis. Regulates the cell division of premeiotic germ cells, the proper modification of meiotic chromosomes, and the faithful progression of meiosis, probably via small RNA-mediated gene silencing. May be involved in histone H3 'Lys-9' demethylation in the pericentromeric region. In Oryza sativa subsp. japonica (Rice), this protein is Protein argonaute MEL1 (MEL1).